Reading from the N-terminus, the 381-residue chain is GDP-mannose-dependent monoacylated alpha-(1-6)-phosphatidylinositol monomannoside mannosyltransferase (381 aa).

GDP-alpha-D-mannose contacts are provided by Arg-206, Lys-211, Leu-261, and Glu-298.

The protein belongs to the glycosyltransferase group 1 family. Glycosyltransferase 4 subfamily.

The enzyme catalyses a 1,2-diacyl-sn-glycero-3-phospho-[alpha-D-mannopyranosyl-(1&lt;-&gt;6)-D-myo-inositol] + GDP-alpha-D-mannose = a 2,6-O-bis(alpha-D-mannopyranosyl)-1-phosphatidyl-1D-myo-inositol + GDP + H(+). It catalyses the reaction a 1,2-diacyl-sn-glycero-3-phospho-[alpha-D-6-acyl-mannopyranosyl-(1&lt;-&gt;6)-D-myo-inositol] + GDP-alpha-D-mannose = a 2-O-(alpha-D-mannosyl)-6-O-(6-O-acyl-alpha-D-mannosyl)-1-phosphatidyl-1D-myo-inositol + GDP + H(+). Its pathway is phospholipid metabolism; phosphatidylinositol metabolism. Involved in the biosynthesis of phosphatidyl-myo-inositol mannosides (PIM) which are early precursors in the biosynthesis of lipomannans (LM) and lipoarabinomannans (LAM). Catalyzes the addition of a mannosyl residue from GDP-D-mannose (GDP-Man) to the position 6 of a phosphatidyl-myo-inositol bearing an alpha-1,2-linked mannose residue (PIM1) to generate phosphatidyl-myo-inositol bearing alpha-1,2- and alpha-1,6-linked mannose residues (Ac1PIM2). PimB also catalyzes the addition of a mannosyl residue from GDP-Man to the position 6 of phosphatidyl-myo-inositol bearing an acylated alpha-1,2-linked mannose residue (Ac1PIM1) to generate monoacylated phosphatidyl-myo-inositol bearing alpha-1,2- and alpha-1,6-linked mannose residues (Ac1PIM2). The addition of the second mannosyl residue by PimB preferentially occurs before the acylation of the mannosyl residue transferred by PimA. Also able to transfer a mannosyl residue from GDP-Man to the position 6 of a phosphatidyl-myo-inositol (PI), but this reaction is very slow. In Corynebacterium glutamicum (strain ATCC 13032 / DSM 20300 / JCM 1318 / BCRC 11384 / CCUG 27702 / LMG 3730 / NBRC 12168 / NCIMB 10025 / NRRL B-2784 / 534), this protein is GDP-mannose-dependent monoacylated alpha-(1-6)-phosphatidylinositol monomannoside mannosyltransferase.